The following is a 144-amino-acid chain: Protein WAP-3 (144 aa).

The N-terminal stretch at 1–21 (MRSRSFLVLVAVFLICETLVA) is a signal peptide. A disordered region spans residues 28 to 49 (RGPKGQGQDPVEGQDQDEGQGP). A region of interest (8 X 6 AA approximate tandem repeats) is located at residue glycine 34. Tandem repeats lie at residues 34-39 (GQDPVE), 40-45 (GQDQDE), 46-51 (GQGPVK), 58-63 (GQDLVK), 64-69 (GQDPVE), 70-75 (GQDPVK), 76-81 (AQLPDK), and 82-87 (VQDPVK). Residues 64-85 (GQDPVEGQDPVKAQLPDKVQDP) form a disordered region. The WAP domain occupies 97 to 144 (LFPKPGVCPKIIFCPLVNPPIKCWRDSHCPGVKKCCPSLCGKGCVTPR). 4 disulfide bridges follow: cysteine 104–cysteine 132, cysteine 110–cysteine 136, cysteine 119–cysteine 131, and cysteine 125–cysteine 140.

Large intestine (relatively low levels).

This chain is Protein WAP-3, found in Sus scrofa (Pig).